Here is a 526-residue protein sequence, read N- to C-terminus: Maturase K (526 aa).

This sequence belongs to the intron maturase 2 family. MatK subfamily.

The protein localises to the plastid. It is found in the chloroplast. Its function is as follows. Usually encoded in the trnK tRNA gene intron. Probably assists in splicing its own and other chloroplast group II introns. The chain is Maturase K from Iris setosa (Hiougi-ayame).